Reading from the N-terminus, the 774-residue chain is Subtilisin-like protease SBT3.5 (774 aa).

Positions 1–23 (MRNCRVLLVLVLSLVIVLNVVRA) are cleaved as a signal peptide. A propeptide spans 24-108 (SDESKVHIVY…VMADSFYELA (85 aa)) (removed in mature form). Positions 29-108 (VHIVYLGEKQ…VMADSFYELA (80 aa)) constitute an Inhibitor I9 domain. The Peptidase S8 domain occupies 112–621 (TWDYLGLSVA…GGIVNPEKAA (510 aa)). Asparagine 128 carries an N-linked (GlcNAc...) asparagine glycan. Residue aspartate 142 is the Charge relay system of the active site. N-linked (GlcNAc...) asparagine glycosylation occurs at asparagine 201. The active-site Charge relay system is the histidine 217. N-linked (GlcNAc...) asparagine glycosylation is found at asparagine 232, asparagine 394, asparagine 409, and asparagine 539. The region spanning 383–478 (SLVYPENAGF…ELGTDVLLYI (96 aa)) is the PA domain. The active-site Charge relay system is the serine 552. 4 N-linked (GlcNAc...) asparagine glycosylation sites follow: asparagine 644, asparagine 654, asparagine 725, and asparagine 755.

It belongs to the peptidase S8 family. In terms of tissue distribution, expressed in roots, leaves, stems, flower buds, developing siliques and mature seeds.

The protein localises to the secreted. The protein resides in the cell wall. Functionally, serine protease that cleaves the pectin methylesterase 17 (PME17) protein to release the PME17 mature form in the apoplasm. This is Subtilisin-like protease SBT3.5 from Arabidopsis thaliana (Mouse-ear cress).